The following is a 587-amino-acid chain: MEPVDRMRELLSFIYGPETGRDTHEALHALLDGWRGRLPSPDEEYASGRLPLDHTDAVLITYGDQFGRKGEAPLATLGEFLREYLSGTMKGVHILPFFPYSSDDGFSVMDYRRVNPEWGTWDDVRRISEDFRLMVDLVLNHCSAKSEWFRRFLQGDPEYEDFFITVEPGTDLSGVFRPRALPLVHEFESAKGPVLVWTTFSRDQVDLNYANPRVLLEMIDIFLFYVSQGAQIIRLDAIAYLWKELGTPCIHHPKTHAVVKLFRAICEEVCPWVLIITETNVPHKENISYFGDMDEAHLVYQFALPPLVLDAFLRKDVSYLREWARTIDTYGGKVSYFNFLASHDGIGVLPARGILPDEYIDAMIEAVKDRGGLISYKSTPQGEVPYELNINYLSAISESHLDRPTRARKFLASQAVMLSLVGMPGIYVHSLLGSENWREGVEKTGMNRTINRQKLSYEGVLEELRDPESLRSMVFEGYLDMLAARRKSRAFDPRGMQEVLEAPETVFALLRRSPDATEEVLCLINVSHIEQECVFPSSIFRTAPDAHLFTELTSGDTLVPYREDEDRFSISLGGYEVLWLTPYRDKG.

Asp-236 functions as the Nucleophile in the catalytic mechanism.

It belongs to the glycosyl hydrolase 13 family. Glucosylglycerate phosphorylase subfamily.

It catalyses the reaction (2R)-2-O-(alpha-D-glucopyranosyl)-glycerate + phosphate = (R)-glycerate + alpha-D-glucose 1-phosphate. Its function is as follows. Catalyzes the reversible phosphorolysis of glucosylglycerate into alpha-D-glucose 1-phosphate (Glc1P) and D-glycerate. May be a regulator of intracellular levels of glucosylglycerate, a compatible solute that primarily protects organisms facing salt stress and very specific nutritional constraints. Cannot catalyze the phosphorolysis of sucrose. The polypeptide is Glucosylglycerate phosphorylase (Spirochaeta thermophila (strain ATCC 700085 / DSM 6578 / Z-1203)).